Here is a 90-residue protein sequence, read N- to C-terminus: Probable Fe(2+)-trafficking protein (90 aa).

It belongs to the Fe(2+)-trafficking protein family.

In terms of biological role, could be a mediator in iron transactions between iron acquisition and iron-requiring processes, such as synthesis and/or repair of Fe-S clusters in biosynthetic enzymes. This is Probable Fe(2+)-trafficking protein from Vibrio atlanticus (strain LGP32) (Vibrio splendidus (strain Mel32)).